Here is a 264-residue protein sequence, read N- to C-terminus: ORC1-type DNA replication protein 2 (264 aa).

ATP-binding positions include T73–L77, Y220, and R232.

The protein belongs to the CDC6/cdc18 family.

Functionally, involved in regulation of DNA replication. The sequence is that of ORC1-type DNA replication protein 2 (orc2) from Halobacterium salinarum (strain ATCC 700922 / JCM 11081 / NRC-1) (Halobacterium halobium).